A 258-amino-acid polypeptide reads, in one-letter code: Capsid protein (258 aa).

The Bipartite nuclear localization signal motif lies at 3-20 (KRPGDIIISTPGSKVRRR). Residues 41-55 (RKRAWVNRPMYRKPT) carry the Nuclear localization signal motif. A zinc finger lies at 69–86 (CEGPCKVQSFEQRDDVKH). Positions 102–123 (LTHRVGKRFCIKSIYILGKIWL) match the Nuclear export signal motif. A Bipartite nuclear localization signal motif is present at residues 202–249 (KRFYRLNHHVTYNHQEAGKYENHTENALLLYMACTHASNPVYATLKIR).

This sequence belongs to the geminiviridae capsid protein family. Homomultimer. Binds to single-stranded and double-stranded viral DNA. Interacts (via nuclear localization signals) with host importin alpha-1a.

Its subcellular location is the virion. It is found in the host nucleus. In terms of biological role, encapsidates the viral DNA into characteristic twinned ('geminate') particles. Binds the genomic viral ssDNA and shuttles it into and out of the cell nucleus. The CP of bipartite geminiviruses is not required for cell-to-cell or systemic movement. The polypeptide is Capsid protein (African cassava mosaic virus (isolate West Kenyan 844) (ACMV)).